Here is a 2588-residue protein sequence, read N- to C-terminus: Histone-lysine N-methyltransferase, H3 lysine-36 specific (2588 aa).

Residues S110 and S118 each carry the phosphoserine modification. Disordered stretches follow at residues 209–264 (GSEQ…LGDT) and 277–307 (LSFQDDPDSSPSPLGNMLEIPGTSSPSTSQE). Positions 235–249 (EKQKNKQRSEVDGSN) are enriched in basic and acidic residues. The segment covering 298 to 307 (GTSSPSTSQE) has biased composition (polar residues). 2 positions are modified to phosphoserine: S380 and S383. A disordered region spans residues 383–403 (SADEKEKPCAKSRVRKSSDNI). K802 participates in a covalent cross-link: Glycyl lysine isopeptide (Lys-Gly) (interchain with G-Cter in SUMO2). Disordered stretches follow at residues 830-899 (ASYR…SDKR), 947-987 (ERKR…PGKE), and 1008-1133 (FDSK…PRLN). Positions 855–874 (GSSTPNSEKPGDSTQDSVHQ) are enriched in polar residues. Residues 881 to 895 (SALSGELSSSLSSLA) show a composition bias toward low complexity. Basic and acidic residues predominate over residues 1008–1033 (FDSKAKQSDPDKNLEKEPSFENRKGP). Positions 1054 to 1073 (PKKRWQRLNQRRPKPGKRAN) are enriched in basic residues. A Glycyl lysine isopeptide (Lys-Gly) (interchain with G-Cter in SUMO2) cross-link involves residue K1237. The segment at 1279-1324 (ASPRPALESEELLVKTPGNYESKRQRKPTKKLLESNDLDPGFMPKK) is disordered. S1408 carries the phosphoserine modification. PHD-type zinc fingers lie at residues 1441 to 1487 (ENVC…CHTG), 1488 to 1544 (IHTC…CHAA), and 1605 to 1649 (VSWC…CKAG). The PWWP domain maps to 1654 to 1716 (YREIVWVKVG…QARVFPYMEG (63 aa)). The AWS domain occupies 1788–1838 (SEIPRCNCKATDENPCGIDSECINRMLLYECHPTVCPAGVRCQNQCFSKRQ). Residues 1840–1957 (PDVEIFRTLQ…AGTELTFNYN (118 aa)) enclose the SET domain. S-adenosyl-L-methionine contacts are provided by residues 1850–1852 (RGW), 1892–1895 (TNFY), 1918–1919 (NH), N1963, and K1969. Residues 1958–1964 (LECLGNG) form an inhibits enzyme activity in the absence of bound histone region. The 17-residue stretch at 1964–1980 (GKTVCKCGAPNCSGFLG) folds into the Post-SET domain. The tract at residues 1989–2010 (VTEEKSRKFKRKPHGKRRSQGE) is disordered. The segment covering 1995–2006 (RKFKRKPHGKRR) has biased composition (basic residues). The PHD-type 4; atypical zinc-finger motif lies at 2016 to 2063 (EDECFSCGDAGQLVSCKKPGCPKVYHADCLNLTKRPAGKWECPWHQCD). Disordered regions lie at residues 2105–2320 (PCGP…PPPE), 2333–2423 (KEKA…PSEH), 2447–2521 (YESA…WGLG), and 2560–2588 (RGQDPKPENAIQALNQAPSSRKCADSEKK). The span at 2179-2196 (RPPERTDSSSHLLDRIRD) shows a compositional bias: basic and acidic residues. Positions 2201-2212 (GTKSQSLVSSQR) are enriched in polar residues. The segment covering 2213 to 2223 (PQDRPPAKEGP) has biased composition (basic and acidic residues). The span at 2232-2249 (SPMTRPSSSPSVSSLPLE) shows a compositional bias: low complexity. A compositionally biased stretch (basic and acidic residues) spans 2250–2261 (RPLRMTDSRLDK). Phosphoserine is present on S2267. Residue T2360 is modified to Phosphothreonine. Residue S2369 is modified to Phosphoserine. K2509 participates in a covalent cross-link: Glycyl lysine isopeptide (Lys-Gly) (interchain with G-Cter in SUMO2).

Belongs to the class V-like SAM-binding methyltransferase superfamily. In terms of assembly, interacts with AR DNA- and ligand-binding domains. Interacts with the ligand-binding domains of RARA and THRA in the absence of ligand; in the presence of ligand the interaction is severely disrupted but some binding still occurs. Interacts with the ligand-binding domains of RXRA and ESRRA only in the presence of ligand. Interacts with ZNF496. As to expression, expressed in the embryo and the outer region of the uterine decidua at early post-implantation 5.5 dpc stage. Uniformly expressed in embryonic and extraembryonic tissues during gastrulation stage 7.5 dpc. Expressed differentially after stage 14.5 dpc with highest expression in proliferating cells. Enriched in the telencephalic region of the brain, spinal cord, intestinal crypt, tooth buds, thymus and salivary glands at stage 16.5 dpc. Also expressed in the ossification region of developing bones and in the periosteum.

Its subcellular location is the nucleus. The protein localises to the chromosome. The catalysed reaction is L-lysyl(36)-[histone H3] + 2 S-adenosyl-L-methionine = N(6),N(6)-dimethyl-L-lysyl(36)-[histone H3] + 2 S-adenosyl-L-homocysteine + 2 H(+). Its function is as follows. Histone methyltransferase that dimethylates Lys-36 of histone H3 (H3K36me2). Transcriptional intermediary factor capable of negatively influencing transcription. May also positively influence transcription. Essential for early post-implantation development. In Mus musculus (Mouse), this protein is Histone-lysine N-methyltransferase, H3 lysine-36 specific.